The following is a 105-amino-acid chain: Large ribosomal subunit protein eL42 (105 aa).

A disordered region spans residues 28 to 57 (YKKGKDSLAAQGKRRYDRKQSGYGGQTKPV).

Belongs to the eukaryotic ribosomal protein eL42 family.

This Gossypium hirsutum (Upland cotton) protein is Large ribosomal subunit protein eL42 (RPL44).